The following is a 249-amino-acid chain: Type III pantothenate kinase (249 aa).

6–13 (DCGNSFIK) provides a ligand contact to ATP. Substrate is bound by residues Y93 and 100–103 (GMDR). D102 serves as the catalytic Proton acceptor. D122 serves as a coordination point for K(+). T125 contacts ATP. T181 is a substrate binding site.

The protein belongs to the type III pantothenate kinase family. Homodimer. Requires NH4(+) as cofactor. K(+) serves as cofactor.

Its subcellular location is the cytoplasm. It catalyses the reaction (R)-pantothenate + ATP = (R)-4'-phosphopantothenate + ADP + H(+). It participates in cofactor biosynthesis; coenzyme A biosynthesis; CoA from (R)-pantothenate: step 1/5. Catalyzes the phosphorylation of pantothenate (Pan), the first step in CoA biosynthesis. This chain is Type III pantothenate kinase, found in Pseudomonas putida (strain W619).